A 486-amino-acid chain; its full sequence is Cysteine--tRNA ligase (486 aa).

Residue cysteine 30 coordinates Zn(2+). Residues 32–42 carry the 'HIGH' region motif; sequence PTVYDRAHLGN. Cysteine 221, histidine 246, and glutamate 250 together coordinate Zn(2+). The short motif at 279–283 is the 'KMSKS' region element; the sequence is KMSKS. Lysine 282 contacts ATP.

This sequence belongs to the class-I aminoacyl-tRNA synthetase family. Monomer. Requires Zn(2+) as cofactor.

It localises to the cytoplasm. The catalysed reaction is tRNA(Cys) + L-cysteine + ATP = L-cysteinyl-tRNA(Cys) + AMP + diphosphate. This Cereibacter sphaeroides (strain ATCC 17029 / ATH 2.4.9) (Rhodobacter sphaeroides) protein is Cysteine--tRNA ligase.